The sequence spans 153 residues: ATP synthase subunit a (153 aa).

2 helical membrane passes run 43-63 (AFHL…LLIF) and 104-124 (IAPL…VDLI).

This sequence belongs to the ATPase A chain family. In terms of assembly, F-type ATPases have 2 components, CF(1) - the catalytic core - and CF(0) - the membrane proton channel. CF(1) has five subunits: alpha(3), beta(3), gamma(1), delta(1), epsilon(1). CF(0) has three main subunits: a(1), b(2) and c(9-12). The alpha and beta chains form an alternating ring which encloses part of the gamma chain. CF(1) is attached to CF(0) by a central stalk formed by the gamma and epsilon chains, while a peripheral stalk is formed by the delta and b chains.

Its subcellular location is the cell inner membrane. Its function is as follows. Key component of the proton channel; it plays a direct role in the translocation of protons across the membrane. This is ATP synthase subunit a (atpB) from Pseudomonas putida (Arthrobacter siderocapsulatus).